The primary structure comprises 295 residues: Small ribosomal subunit protein uS2 (295 aa).

The segment at 261–295 (QAKKFSKTKNIDEETNTEFEQVLNDADENKNSDNA) is disordered.

It belongs to the universal ribosomal protein uS2 family.

The protein is Small ribosomal subunit protein uS2 of Rickettsia rickettsii (strain Sheila Smith).